The primary structure comprises 84 residues: Carboxysome shell vertex protein CsoS4B (84 aa).

Positions 1 to 77 constitute a BMV domain; that stretch reads MQILQVKKQL…TDLTVGGIID (77 aa).

It belongs to the CcmL/EutN family. CsoS4 subfamily. As to quaternary structure, homopentamer.

Its subcellular location is the carboxysome. Its function is as follows. Probably forms vertices in the carboxysome, a polyhedral inclusion where RuBisCO (ribulose bisphosphate carboxylase, cbbL-cbbS) is sequestered. Has been modeled to induce curvature upon insertion into an otherwise flat hexagonal layer of major carboxysome subunits. The sequence is that of Carboxysome shell vertex protein CsoS4B from Hydrogenovibrio crunogenus (strain DSM 25203 / XCL-2) (Thiomicrospira crunogena).